A 255-amino-acid chain; its full sequence is Type III pantothenate kinase (255 aa).

D6–V13 serves as a coordination point for ATP. Substrate is bound by residues Y100 and G107 to R110. The active-site Proton acceptor is D109. D129 is a binding site for K(+). T132 serves as a coordination point for ATP. T184 is a substrate binding site.

It belongs to the type III pantothenate kinase family. Homodimer. NH4(+) is required as a cofactor. The cofactor is K(+).

The protein resides in the cytoplasm. The enzyme catalyses (R)-pantothenate + ATP = (R)-4'-phosphopantothenate + ADP + H(+). The protein operates within cofactor biosynthesis; coenzyme A biosynthesis; CoA from (R)-pantothenate: step 1/5. Catalyzes the phosphorylation of pantothenate (Pan), the first step in CoA biosynthesis. This is Type III pantothenate kinase from Geobacter sulfurreducens (strain ATCC 51573 / DSM 12127 / PCA).